The following is a 68-amino-acid chain: uncharacterized protein (68 aa).

The HMA domain occupies 2–67 (KTITLNIKGI…VIEDAGFDAT (66 aa)). A metal cation contacts are provided by Cys13 and Cys16.

This is an uncharacterized protein from Haemophilus influenzae (strain ATCC 51907 / DSM 11121 / KW20 / Rd).